The chain runs to 64 residues: Large ribosomal subunit protein bL35 (64 aa).

The protein belongs to the bacterial ribosomal protein bL35 family.

This is Large ribosomal subunit protein bL35 from Pseudomonas savastanoi pv. phaseolicola (strain 1448A / Race 6) (Pseudomonas syringae pv. phaseolicola (strain 1448A / Race 6)).